The primary structure comprises 679 residues: Glycine--tRNA ligase beta subunit (679 aa).

Belongs to the class-II aminoacyl-tRNA synthetase family. Tetramer of two alpha and two beta subunits.

The protein localises to the cytoplasm. It carries out the reaction tRNA(Gly) + glycine + ATP = glycyl-tRNA(Gly) + AMP + diphosphate. This Streptococcus pyogenes serotype M1 protein is Glycine--tRNA ligase beta subunit.